Here is a 175-residue protein sequence, read N- to C-terminus: Large ribosomal subunit protein uL10 (175 aa).

The protein belongs to the universal ribosomal protein uL10 family. Part of the ribosomal stalk of the 50S ribosomal subunit. The N-terminus interacts with L11 and the large rRNA to form the base of the stalk. The C-terminus forms an elongated spine to which L12 dimers bind in a sequential fashion forming a multimeric L10(L12)X complex.

Forms part of the ribosomal stalk, playing a central role in the interaction of the ribosome with GTP-bound translation factors. In Synechococcus elongatus (strain ATCC 33912 / PCC 7942 / FACHB-805) (Anacystis nidulans R2), this protein is Large ribosomal subunit protein uL10.